A 242-amino-acid chain; its full sequence is Vacuole localized DSC protein 1 (242 aa).

A run of 2 helical transmembrane segments spans residues 128–148 (PYGF…PTAF) and 152–172 (LLLV…INGS).

Part of the vacuole-localized DSC E3 ligase complex composed of at least TUL1, DSC2, DSC3, UBX3, CDC48 and VLD1.

Its subcellular location is the vacuole membrane. Its function is as follows. Component of the vacuole-localized DSC E3 ubiquitin ligase complex involved in the targeting of the complex to the vacuole membrane via the AP3 pathway to ubiquinate vacuolar membrane proteins. Competes with GLD1 to determine the subcellular localizations of the DSC complex. The protein is Vacuole localized DSC protein 1 of Saccharomyces cerevisiae (strain ATCC 204508 / S288c) (Baker's yeast).